We begin with the raw amino-acid sequence, 200 residues long: Nucleoside triphosphate pyrophosphatase (200 aa).

The Proton acceptor role is filled by Asp79.

Belongs to the Maf family. A divalent metal cation is required as a cofactor.

It is found in the cytoplasm. It catalyses the reaction a ribonucleoside 5'-triphosphate + H2O = a ribonucleoside 5'-phosphate + diphosphate + H(+). It carries out the reaction a 2'-deoxyribonucleoside 5'-triphosphate + H2O = a 2'-deoxyribonucleoside 5'-phosphate + diphosphate + H(+). Its function is as follows. Nucleoside triphosphate pyrophosphatase. May have a dual role in cell division arrest and in preventing the incorporation of modified nucleotides into cellular nucleic acids. The chain is Nucleoside triphosphate pyrophosphatase from Legionella pneumophila (strain Corby).